We begin with the raw amino-acid sequence, 332 residues long: Abl interactor homolog (332 aa).

Positions 73–104 (HITSLLQLQTNEMEKLNIEIQTLTQRVRMIHD) form a coiled coil. The tract at residues 152–332 (SDINQNGVPP…NDFPPPPPPM (181 aa)) is disordered. A compositionally biased stretch (low complexity) spans 164–206 (NHSNSSANLTSSSGHLAASSTSNSSTPSYQSPSYSSQPTISSG). Over residues 221–247 (APPPPSLSVPAAPPPPVMNVPPPPPTS) the composition is skewed to pro residues. Positions 248–257 (QRPSSVNNNA) are enriched in polar residues. Pro residues predominate over residues 277 to 314 (LPPPPSFGLPPPPTLGDDFPPPPPPPVGSYDFPPPPAR).

Belongs to the ABI family. As to quaternary structure, part of a Scar/WAVE complex containing brk1, scrA, abiA, pirA and napA. Interacts with scrA.

Involved in regulation of actin and microtubule organization. Required for proper cytokinesis. The polypeptide is Abl interactor homolog (abiA) (Dictyostelium discoideum (Social amoeba)).